A 567-amino-acid polypeptide reads, in one-letter code: Thiol:disulfide interchange protein DsbD (567 aa).

Positions 1–19 (MAQRIFTLILLLCSTSAFA) are cleaved as a signal peptide. Intrachain disulfides connect C122-C128 and C185-C307. 7 helical membrane passes run 170 to 192 (ALWA…MYPL), 212 to 234 (LAFI…VAAA), 246 to 268 (YVLI…LFTL), 297 to 319 (GAIA…LLYI), 326 to 348 (WLGG…LVTV), 358 to 380 (GPWM…VFLL), and 387 to 409 (AWGL…ITSL). One can recognise a Thioredoxin domain in the interval 435 to 567 (QDWAFGSPSA…FSAHLHDRQP (133 aa)). C482 and C485 form a disulfide bridge.

Belongs to the thioredoxin family. DsbD subfamily.

Its subcellular location is the cell inner membrane. The catalysed reaction is [protein]-dithiol + NAD(+) = [protein]-disulfide + NADH + H(+). It carries out the reaction [protein]-dithiol + NADP(+) = [protein]-disulfide + NADPH + H(+). Its function is as follows. Required to facilitate the formation of correct disulfide bonds in some periplasmic proteins and for the assembly of the periplasmic c-type cytochromes. Acts by transferring electrons from cytoplasmic thioredoxin to the periplasm. This transfer involves a cascade of disulfide bond formation and reduction steps. In Salmonella typhimurium (strain LT2 / SGSC1412 / ATCC 700720), this protein is Thiol:disulfide interchange protein DsbD.